The chain runs to 354 residues: Rhodopsin (354 aa).

At 1–36 the chain is on the extracellular side; it reads MNGTEGPYFNVPMVNTTGIVRSPYEYPQYYLVSPAA. N-linked (GlcNAc...) asparagine glycosylation is found at N2 and N15. The chain crosses the membrane as a helical span at residues 37 to 61; the sequence is YAALGAYMFFLILVGFPINFLTLYV. Topologically, residues 62–73 are cytoplasmic; that stretch reads TLEHKKLRTPLN. The helical transmembrane segment at 74-96 threads the bilayer; the sequence is YILLNLAVADLFMVFGGFTTTMY. Topologically, residues 97–110 are extracellular; that stretch reads TSMHGYFVLGRLGC. C110 and C187 are oxidised to a cystine. Residues 111 to 133 traverse the membrane as a helical segment; that stretch reads NLEGFFATLGGEIGLWSLVVLAI. A 'Ionic lock' involved in activated form stabilization motif is present at residues 134-136; the sequence is ERW. The Cytoplasmic portion of the chain corresponds to 134–152; the sequence is ERWVVVCKPISNFRFGENH. The helical transmembrane segment at 153 to 173 threads the bilayer; it reads AIMGLVFTWIMAASCAVPPLV. Residues 174–202 lie on the Extracellular side of the membrane; the sequence is GWSRYIPEGMQCSCGVDYYTRAEGFNNES. The helical transmembrane segment at 203–224 threads the bilayer; sequence FVVYMFVCHFLIPLIVVFFCYG. The Cytoplasmic portion of the chain corresponds to 225-252; that stretch reads RLLCAVKEAAAAQQESETTQRAEREVTR. The helical transmembrane segment at 253–274 threads the bilayer; that stretch reads MVVIMVIGFLVCWLPYASVAWY. The Extracellular portion of the chain corresponds to 275-286; the sequence is IFTNQGSEFGPL. A helical membrane pass occupies residues 287–308; it reads FMTIPAFFAKSSSIYNPAIYIC. K296 carries the post-translational modification N6-(retinylidene)lysine. Over 309-354 the chain is Cytoplasmic; it reads MNKQFRNCMITTLCCGKNPFEEEEGASTTASKTEASSVSSSSVSPA. Residues C322 and C323 are each lipidated (S-palmitoyl cysteine). The tract at residues 332 to 354 is disordered; it reads EGASTTASKTEASSVSSSSVSPA. Over residues 334-354 the composition is skewed to low complexity; it reads ASTTASKTEASSVSSSSVSPA.

This sequence belongs to the G-protein coupled receptor 1 family. Opsin subfamily. Post-translationally, phosphorylated on some or all of the serine and threonine residues present in the C-terminal region. In terms of processing, contains one covalently linked retinal chromophore.

Its subcellular location is the membrane. It localises to the cell projection. The protein localises to the cilium. The protein resides in the photoreceptor outer segment. Its function is as follows. Photoreceptor required for image-forming vision at low light intensity. While most salt water fish species use retinal as chromophore, most freshwater fish use 3-dehydroretinal, or a mixture of retinal and 3-dehydroretinal. Light-induced isomerization of 11-cis to all-trans retinal triggers a conformational change that activates signaling via G-proteins. Subsequent receptor phosphorylation mediates displacement of the bound G-protein alpha subunit by arrestin and terminates signaling. This chain is Rhodopsin (rho), found in Oryzias latipes (Japanese rice fish).